The sequence spans 123 residues: Large ribosomal subunit protein uL14 (123 aa).

Belongs to the universal ribosomal protein uL14 family. In terms of assembly, part of the 50S ribosomal subunit. Forms a cluster with proteins L3 and L19. In the 70S ribosome, L14 and L19 interact and together make contacts with the 16S rRNA in bridges B5 and B8.

Functionally, binds to 23S rRNA. Forms part of two intersubunit bridges in the 70S ribosome. The chain is Large ribosomal subunit protein uL14 from Koribacter versatilis (strain Ellin345).